Consider the following 166-residue polypeptide: MSDKIGLYSGSFDPVTNGHMDIIARASQLFDHLYIGVFFNPEKKGFFDLETRINVLKEALVDYPNISVVSAADSLAVDLAKSLGVTHMVRGLRNPTDFEYESNLEFFNNRLDPSIDTIYFIAHNLMQPISSSRVKELIHFNSSIEGLVPQSVIKQLESMNESNQNL.

Residue serine 11 participates in substrate binding. ATP contacts are provided by residues 11–12 and histidine 19; that span reads SF. Lysine 43, alanine 76, and arginine 90 together coordinate substrate. ATP contacts are provided by residues 91 to 93, glutamate 101, and 126 to 132; these read GLR and MQPISSS.

It belongs to the bacterial CoaD family. In terms of assembly, homohexamer. Mg(2+) serves as cofactor.

The protein localises to the cytoplasm. It catalyses the reaction (R)-4'-phosphopantetheine + ATP + H(+) = 3'-dephospho-CoA + diphosphate. Its pathway is cofactor biosynthesis; coenzyme A biosynthesis; CoA from (R)-pantothenate: step 4/5. In terms of biological role, reversibly transfers an adenylyl group from ATP to 4'-phosphopantetheine, yielding dephospho-CoA (dPCoA) and pyrophosphate. In Streptococcus uberis (strain ATCC BAA-854 / 0140J), this protein is Phosphopantetheine adenylyltransferase.